The sequence spans 277 residues: Short chain dehydrogenase penD (277 aa).

The NADP(+) site is built by isoleucine 28, aspartate 76, and asparagine 105. Residues serine 158 and serine 159 each act as proton donor in the active site. NADP(+) contacts are provided by tyrosine 173, lysine 177, and threonine 209. Tyrosine 173 (proton acceptor) is an active-site residue. The active-site Lowers pKa of active site Tyr is the lysine 177.

The protein belongs to the short-chain dehydrogenases/reductases (SDR) family.

It catalyses the reaction yaequinolone D + NADPH + H(+) = penigequinolone A + NADP(+) + H2O. The enzyme catalyses yaequinolone D + NADPH + H(+) = penigequinolone B + NADP(+) + H2O. The protein operates within secondary metabolite biosynthesis. It participates in alkaloid biosynthesis. It functions in the pathway mycotoxin biosynthesis. Functionally, short chain dehydrogenase; part of the gene cluster that mediates the biosynthesis of penigequinolones, potent insecticidal alkaloids that contain a highly modified 10-carbon prenyl group. The first stage is catalyzed by the nonribosomal peptide synthetase penN that condenses anthranilic acid and O-methyl-L-tyrosine to produce 4'-methoxycyclopeptin. 4'-methoxycyclopeptin is then converted to 4'-methoxydehydrocyclopeptin by the ketoglutarate-dependent dioxygenase penM through dehydrogenation to form a double bond between C-alpha and C-beta of the O-methyltyrosine side chain. PenM also converts its first product methoxydehydrocyclopeptin to 4'-methoxycyclopenin. The following conversion of 4'methoxycyclopenin into 4'-methoxyviridicatin is catalyzed by the cyclopenase penL. 4'-methoxyviridicatin is the precursor of quinolone natural products, and is further converted to quinolinone B. The prenyltransferase penI then catalyzes the canonical Friedel-Crafts alkylation of quinolinone B with dimethylallyl cation to yield dimethylallyl quinolone, which is subjected to FAD-dependent dehydrogenation by the FAD-linked oxidoreductase penH to yield conjugated aryl diene. The delta(3') double bond then serves as the site of the second alkylation with DMAPP catalyzed by the prenyltransferase penG to yield a carbenium ion intermediate, which can be attacked by H(2)O to yield a styrenyl quinolone containing a C3'-hydroxyprenyl chain, or undergo cyclization to yield yaequinolones J1 and J2. The conversion of the styrenyl quinolone into the tetrahydrofuran-containing yaequinolone C is performed by the FAD-dependent monooxygenase penE and involves epoxidation of the terminal C7'-C8' olefin, followed by epoxide ring opening initiated by the C3' hydroxyl group. The predicted cysteine hydrolase penJ acts as an epoxide hydrolase that enhances the rate of the 5-exo-tet cyclization step, increasing the yield of yaequinolone C. PenF catalyzes the cationic rearrangement of the epoxide formed by penE (before ring opening to produce yaequinolone C) into yaequinolone D. Finally, the short-chain dehydrogenase/reductase (SDR)-like reductase penD, catalyzes both the dehydration of yaequinolone D and the reduction of the resulting oxonium to yield penigequinolone. The protein is Short chain dehydrogenase penD of Penicillium thymicola.